A 131-amino-acid chain; its full sequence is Protein NrdI (131 aa).

Belongs to the NrdI family.

Probably involved in ribonucleotide reductase function. This is Protein NrdI from Bacillus licheniformis (strain ATCC 14580 / DSM 13 / JCM 2505 / CCUG 7422 / NBRC 12200 / NCIMB 9375 / NCTC 10341 / NRRL NRS-1264 / Gibson 46).